Reading from the N-terminus, the 76-residue chain is Acyl carrier protein (76 aa).

The Carrier domain occupies 1-76 (MAIFDDIKEV…DVVRYIETNK (76 aa)). Serine 36 bears the O-(pantetheine 4'-phosphoryl)serine mark.

It belongs to the acyl carrier protein (ACP) family. 4'-phosphopantetheine is transferred from CoA to a specific serine of apo-ACP by AcpS. This modification is essential for activity because fatty acids are bound in thioester linkage to the sulfhydryl of the prosthetic group.

The protein localises to the cytoplasm. The protein operates within lipid metabolism; fatty acid biosynthesis. Functionally, carrier of the growing fatty acid chain in fatty acid biosynthesis. The protein is Acyl carrier protein of Wolinella succinogenes (strain ATCC 29543 / DSM 1740 / CCUG 13145 / JCM 31913 / LMG 7466 / NCTC 11488 / FDC 602W) (Vibrio succinogenes).